Reading from the N-terminus, the 218-residue chain is Ras-related protein Rab-4A (218 aa).

Residues glycine 23, threonine 24, glycine 25, lysine 26, serine 27, cysteine 28, serine 42, histidine 44, and threonine 45 each contribute to the GTP site. Residue serine 27 participates in Mg(2+) binding. The short motif at 44–49 (HTIGVE) is the Switch 1 element. Positions 45 and 68 each coordinate Mg(2+). The Switch 2 signature appears at 70–79 (AGQERFRSVT). Glycine 71 serves as a coordination point for GTP. Glutamine 72 is subject to 5-glutamyl serotonin. Residues asparagine 126, lysine 127, aspartate 129, alanine 157, and leucine 158 each coordinate GTP. Serine 190 is subject to Phosphoserine. Serine 204 is modified (phosphoserine; by CDK1). 2 S-geranylgeranyl cysteine lipidation sites follow: cysteine 216 and cysteine 218. A Cysteine methyl ester modification is found at cysteine 218.

Belongs to the small GTPase superfamily. Rab family. As to quaternary structure, interacts with SGSM1, SGSM2 and SGSM3. Interacts with RAB11FIP1, RABEP1, ZFYVE20 and RUFY1. Interacts (membrane-bound form) with NDRG1; the interaction involves NDRG1 in vesicular recycling of E-cadherin. Interacts (in GTP-bound form) with GRIPAP1 (via N-terminus). Interacts with RABEP1 and RBSN. Does not interact with HPS4. Does not interact with HPS4. Interacts with RABEP2; this interaction may mediate VEGFR2 cell surface expression. Requires Mg(2+) as cofactor. Serotonylation of Gln-72 by TGM2 during activation and aggregation of platelets leads to constitutive activation of GTPase activity. In terms of processing, phosphorylated by CDK1 kinase during mitosis. In terms of tissue distribution, expressed in the central nervous system, including cortex, cerebellum, midbrain and spinal cord, and in the kidney, lung, liver and spleen.

Its subcellular location is the membrane. It is found in the cytoplasm. The protein resides in the early endosome membrane. The protein localises to the recycling endosome membrane. The enzyme catalyses GTP + H2O = GDP + phosphate + H(+). Regulated by guanine nucleotide exchange factors (GEFs) which promote the exchange of bound GDP for free GTP. Regulated by GTPase activating proteins (GAPs) which increase the GTP hydrolysis activity. Inhibited by GDP dissociation inhibitors (GDIs). Functionally, the small GTPases Rab are key regulators of intracellular membrane trafficking, from the formation of transport vesicles to their fusion with membranes. Rabs cycle between an inactive GDP-bound form and an active GTP-bound form that is able to recruit to membranes different sets of downstream effectors directly responsible for vesicle formation, movement, tethering and fusion. RAB4A is involved in protein transport. Also plays a role in vesicular traffic. Mediates VEGFR2 endosomal trafficking to enhance VEGFR2 signaling. Acts as a regulator of platelet alpha-granule release during activation and aggregation of platelets. This chain is Ras-related protein Rab-4A, found in Mus musculus (Mouse).